The primary structure comprises 75 residues: ATP synthase subunit c (75 aa).

A run of 2 helical transmembrane segments spans residues 12–32 and 49–69; these read LASI…GIVV and LTVL…IGIG.

The protein belongs to the ATPase C chain family. In terms of assembly, F-type ATPases have 2 components, F(1) - the catalytic core - and F(0) - the membrane proton channel. F(1) has five subunits: alpha(3), beta(3), gamma(1), delta(1), epsilon(1). F(0) has three main subunits: a(1), b(2) and c(10-14). The alpha and beta chains form an alternating ring which encloses part of the gamma chain. F(1) is attached to F(0) by a central stalk formed by the gamma and epsilon chains, while a peripheral stalk is formed by the delta and b chains.

It is found in the cell membrane. Functionally, f(1)F(0) ATP synthase produces ATP from ADP in the presence of a proton or sodium gradient. F-type ATPases consist of two structural domains, F(1) containing the extramembraneous catalytic core and F(0) containing the membrane proton channel, linked together by a central stalk and a peripheral stalk. During catalysis, ATP synthesis in the catalytic domain of F(1) is coupled via a rotary mechanism of the central stalk subunits to proton translocation. In terms of biological role, key component of the F(0) channel; it plays a direct role in translocation across the membrane. A homomeric c-ring of between 10-14 subunits forms the central stalk rotor element with the F(1) delta and epsilon subunits. This is ATP synthase subunit c from Tropheryma whipplei (strain TW08/27) (Whipple's bacillus).